We begin with the raw amino-acid sequence, 132 residues long: Small ribosomal subunit protein uS8 (132 aa).

This sequence belongs to the universal ribosomal protein uS8 family. In terms of assembly, part of the 30S ribosomal subunit. Contacts proteins S5 and S12.

Functionally, one of the primary rRNA binding proteins, it binds directly to 16S rRNA central domain where it helps coordinate assembly of the platform of the 30S subunit. The chain is Small ribosomal subunit protein uS8 (rpsH) from Caldanaerobacter subterraneus subsp. tengcongensis (strain DSM 15242 / JCM 11007 / NBRC 100824 / MB4) (Thermoanaerobacter tengcongensis).